The following is a 1866-amino-acid chain: Protein NLRC5 (1866 aa).

Residues 105–135 (GAEGKSQPESQLHHGLKRPHQSCGSSPRRKQ) form a disordered region. The 318-residue stretch at 222–539 (RVTVLLGKAG…PKVNKDTLTQ (318 aa)) folds into the NACHT domain. An ATP-binding site is contributed by 228 to 235 (GKAGMGKT). LRR repeat units follow at residues 599–622 (LKKL…VDET), 713–737 (MGRL…LVKA), 741–765 (CPQL…IVEV), 769–792 (LPRL…CLAR), 869–892 (GPHL…LMAE), 897–921 (LHIA…VLRA), 930–953 (ELHI…EQKG), 976–1000 (SRRM…ALGG), 1004–1026 (LGHL…RLAQ), 1031–1058 (LGAL…CFST), 1138–1161 (LELQ…CLPQ), 1162–1184 (LPQL…FLLA), 1242–1265 (CKDL…CLLE), 1272–1294 (ISGL…LLET), 1462–1488 (CARL…LLQS), 1493–1516 (LSEL…HLAS), 1521–1544 (CHHL…ALMR), 1554–1577 (RLDL…LSQM), 1578–1600 (TCLQ…HLSE), 1605–1628 (ATSL…HLAT), 1633–1656 (LPEL…QLAE), 1661–1684 (CRRL…GLAQ), 1687–1714 (PQHL…ALDG), 1715–1739 (SPHL…CMEL), 1741–1762 (LLRQ…LLTS), and 1795–1818 (MGRL…LLAE).

The protein belongs to the NLRP family. As to quaternary structure, interacts with CHUK and IKBKB; prevents CHUK and IKBKB phosphorylation and inhibits their kinase activity. Interacts with RIGI and IFIH1; blocks the interaction of MAVS to RIGI. Expressed in spleen, thymus, lung, brain, tonsil, heart and prostate.

It is found in the cytoplasm. Functionally, probable regulator of the NF-kappa-B and type I interferon signaling pathways. May also regulate the type II interferon signaling pathway. Plays a role in homeostatic control of innate immunity and in antiviral defense mechanisms. In Homo sapiens (Human), this protein is Protein NLRC5 (NLRC5).